The primary structure comprises 194 residues: ATP-dependent Clp protease proteolytic subunit (194 aa).

Residue serine 99 is the Nucleophile of the active site. The active site involves histidine 124.

The protein belongs to the peptidase S14 family. Fourteen ClpP subunits assemble into 2 heptameric rings which stack back to back to give a disk-like structure with a central cavity, resembling the structure of eukaryotic proteasomes.

The protein localises to the cytoplasm. It catalyses the reaction Hydrolysis of proteins to small peptides in the presence of ATP and magnesium. alpha-casein is the usual test substrate. In the absence of ATP, only oligopeptides shorter than five residues are hydrolyzed (such as succinyl-Leu-Tyr-|-NHMec, and Leu-Tyr-Leu-|-Tyr-Trp, in which cleavage of the -Tyr-|-Leu- and -Tyr-|-Trp bonds also occurs).. Functionally, cleaves peptides in various proteins in a process that requires ATP hydrolysis. Has a chymotrypsin-like activity. Plays a major role in the degradation of misfolded proteins. This is ATP-dependent Clp protease proteolytic subunit from Clostridium perfringens (strain ATCC 13124 / DSM 756 / JCM 1290 / NCIMB 6125 / NCTC 8237 / Type A).